A 704-amino-acid polypeptide reads, in one-letter code: Polyribonucleotide nucleotidyltransferase (704 aa).

Positions 487 and 493 each coordinate Mg(2+). The region spanning 554 to 613 (PRLLTIKIHPDKIREVIGKGGSTIQAITKETGTQIDIQDDGTIIIASVNAIAAQAAKSRI) is the KH domain. The S1 motif domain maps to 623-691 (GRIYEGKVAK…KQGRIRLSIK (69 aa)).

Belongs to the polyribonucleotide nucleotidyltransferase family. As to quaternary structure, component of the RNA degradosome, which is a multiprotein complex involved in RNA processing and mRNA degradation. The cofactor is Mg(2+).

It localises to the cytoplasm. The catalysed reaction is RNA(n+1) + phosphate = RNA(n) + a ribonucleoside 5'-diphosphate. Involved in mRNA degradation. Catalyzes the phosphorolysis of single-stranded polyribonucleotides processively in the 3'- to 5'-direction. In Xanthomonas oryzae pv. oryzae (strain MAFF 311018), this protein is Polyribonucleotide nucleotidyltransferase.